Reading from the N-terminus, the 123-residue chain is Large ribosomal subunit protein bL12 (123 aa).

This sequence belongs to the bacterial ribosomal protein bL12 family. Homodimer. Part of the ribosomal stalk of the 50S ribosomal subunit. Forms a multimeric L10(L12)X complex, where L10 forms an elongated spine to which 2 to 4 L12 dimers bind in a sequential fashion. Binds GTP-bound translation factors.

Functionally, forms part of the ribosomal stalk which helps the ribosome interact with GTP-bound translation factors. Is thus essential for accurate translation. The polypeptide is Large ribosomal subunit protein bL12 (Clostridium acetobutylicum (strain ATCC 824 / DSM 792 / JCM 1419 / IAM 19013 / LMG 5710 / NBRC 13948 / NRRL B-527 / VKM B-1787 / 2291 / W)).